A 302-amino-acid chain; its full sequence is Mitochondrial glycine transporter (302 aa).

Solcar repeat units follow at residues 22 to 112 (HPVF…LKHH), 119 to 203 (PKPL…AKKL), and 213 to 297 (FSPV…MMEK). 6 helical membrane passes run 28-53 (FVCG…TRIQ), 87-113 (GVSP…KHHF), 125-150 (VMLG…TRYE), 178-201 (GLTA…TRAK), 217-243 (LNFS…KTHM), and 272-290 (GGVP…AWTV).

Belongs to the mitochondrial carrier (TC 2.A.29) family. SLC25A38 subfamily.

Its subcellular location is the mitochondrion inner membrane. The enzyme catalyses glycine(in) = glycine(out). In terms of biological role, mitochondrial glycine transporter that imports glycine into the mitochondrial matrix. Plays an important role in providing glycine for the first enzymatic step in heme biosynthesis, the condensation of glycine with succinyl-CoA to produce 5-aminolevulinate (ALA) in the mitochondrial matrix. Required during erythropoiesis. May play a role as pro-apoptotic protein that induces caspase-dependent apoptosis. The protein is Mitochondrial glycine transporter of Xenopus laevis (African clawed frog).